The chain runs to 137 residues: uncharacterized protein (137 aa).

This is an uncharacterized protein from Rickettsia prowazekii (strain Madrid E).